The chain runs to 320 residues: Meso-diaminopimelate D-dehydrogenase (320 aa).

Residues 11-14, 35-37, 65-68, 88-90, and 117-121 each bind NADP(+); these read YGNL, SRR, CMGS, TYD, and TGWDP. Substrate contacts are provided by residues Asp90, Asp120, Trp144, 150-151, Thr169, Arg195, His244, and Asn270; that span reads QG.

As to quaternary structure, homodimer.

It catalyses the reaction meso-2,6-diaminopimelate + NADP(+) + H2O = (S)-2-amino-6-oxoheptanedioate + NH4(+) + NADPH + H(+). It participates in amino-acid biosynthesis; L-lysine biosynthesis via DAP pathway; DL-2,6-diaminopimelate from (S)-tetrahydrodipicolinate: step 1/1. With respect to regulation, l,L-2,6-diaminopimelate and D,D-2,6-diaminopimelate competitively inhibit the oxidative deamination of meso-2,6-diaminopimelate. The enzyme is also inhibited by L-cysteine, and by p-chloromercuribenzoate, iodoacetic acid and HgCl(2) in vitro. Catalyzes the reversible NADPH-dependent reductive amination of L-2-amino-6-oxopimelate, the acyclic form of L-tetrahydrodipicolinate, to generate the meso compound, D,L-2,6-diaminopimelate. Probably plays a role in lysine biosynthesis. Exhibits a high substrate specificity for meso-2,6-diaminopimelate, since L,L-2,6-diaminopimelate, D,D-2,6-diaminopimelate, L-glutamate, L-alanine, L-leucine, L-valine, L-aspartate, L-threonine, L-homoserine, L-methionine, L-lysine, L-serine, L-phenylalanine, L-tyrosine, L-tryptophan, L-ornithine, L-histidine, L-arginine, D-glutamate, and D-alanine are not substrates for the oxidative deamination reaction. Can use NAD(+) only poorly since the activity observed in the presence of NAD(+) is about 3% of that with NADP(+). The chain is Meso-diaminopimelate D-dehydrogenase (ddh) from Corynebacterium glutamicum (strain ATCC 13032 / DSM 20300 / JCM 1318 / BCRC 11384 / CCUG 27702 / LMG 3730 / NBRC 12168 / NCIMB 10025 / NRRL B-2784 / 534).